The following is a 148-amino-acid chain: Holo-[acyl-carrier-protein] synthase (148 aa).

Positions 8 and 57 each coordinate Mg(2+).

It belongs to the P-Pant transferase superfamily. AcpS family. The cofactor is Mg(2+).

The protein resides in the cytoplasm. It carries out the reaction apo-[ACP] + CoA = holo-[ACP] + adenosine 3',5'-bisphosphate + H(+). In terms of biological role, transfers the 4'-phosphopantetheine moiety from coenzyme A to a Ser of acyl-carrier-protein. The polypeptide is Holo-[acyl-carrier-protein] synthase (Ruegeria pomeroyi (strain ATCC 700808 / DSM 15171 / DSS-3) (Silicibacter pomeroyi)).